The sequence spans 530 residues: Pancreatic secretory granule membrane major glycoprotein GP2 (530 aa).

Positions 1–21 (MVACDLLWLAAASCLLTLVFP) are cleaved as a signal peptide. N-linked (GlcNAc...) asparagine glycosylation is present at Asn-33. 11 cysteine pairs are disulfide-bonded: Cys-41–Cys-52, Cys-56–Cys-150, Cys-78–Cys-168, Cys-100–Cys-138, Cys-106–Cys-173, Cys-131–Cys-139, Cys-183–Cys-193, Cys-187–Cys-202, Cys-204–Cys-234, Cys-222–Cys-313, and Cys-254–Cys-277. The tract at residues 54–74 (DPCQNHTVLNDPSRSTENTVS) is D10C. N-linked (GlcNAc...) asparagine glycosylation is found at Asn-58 and Asn-127. One can recognise an EGF-like domain in the interval 179-223 (APKKCEIACRPEEECVFQNNSWTCVCRQDLNVSDTLSLQPLLDCG). Asn-197 and Asn-209 each carry an N-linked (GlcNAc...) asparagine glycan. The ZP-N stretch occupies residues 221 to 314 (DCGANEIKVK…FLVNVNFQCA (94 aa)). The 257-residue stretch at 221–477 (DCGANEIKVK…PSCSTSRLRS (257 aa)) folds into the ZP domain. N-linked (GlcNAc...) asparagine glycosylation is found at Asn-284 and Asn-320. The segment at 315-338 (YPLDMNVSLQTALQPIVSSLNVDV) is flexible ZP-N/ZP-C linker. The tract at residues 339–350 (GGAGEFTVTMAL) is internal hydrophobic patch (IHP). Positions 339 to 477 (GGAGEFTVTM…PSCSTSRLRS (139 aa)) are ZP-C. Intrachain disulfides connect Cys-394–Cys-454, Cys-415–Cys-470, and Cys-459–Cys-466. Residues 484-492 (LTRVLDIGP) form an external hydrophobic patch (EHP) region. Asn-505 is lipidated: GPI-anchor amidated asparagine. Positions 506–530 (GTPRNTGFLLAWPTFFLPVFLAWLF) are cleaved as a propeptide — removed in mature form.

In terms of assembly, interacts with SYCN. Interacts with bacterial adhesin fimH. N-glycosylated. In terms of tissue distribution, expressed in pancreas.

It localises to the zymogen granule membrane. It is found in the secreted. Its subcellular location is the cell membrane. The protein localises to the apical cell membrane. The protein resides in the membrane raft. It localises to the endosome. Its function is as follows. Functions as an intestinal M-cell transcytotic receptor specific of type-I-piliated bacteria that participates in the mucosal immune response toward these bacteria. At the apical membrane of M-cells it binds fimH, a protein of the bacteria type I pilus tip. Internalizes bound bacteria, like E.coli and S.typhimurium, from the lumen of the intestine and delivers them, through M-cells, to the underlying organized lymphoid follicles where they are captured by antigen-presenting dendritic cells to elicit a mucosal immune response. This Rattus norvegicus (Rat) protein is Pancreatic secretory granule membrane major glycoprotein GP2.